The sequence spans 177 residues: Protein C (177 aa).

Over residues 1–10 (MSTKAWNASR) the composition is skewed to polar residues. Positions 1-38 (MSTKAWNASRLSGPDPSTPWSLRKPLQHGSRPPKGKRL) are disordered.

This sequence belongs to the morbillivirus protein C family.

The polypeptide is Protein C (P/V/C) (Rinderpest virus (strain RBOK) (RDV)).